The following is a 133-amino-acid chain: Cytochrome c-type biogenesis protein CcmE (133 aa).

Topologically, residues M1 to R7 are cytoplasmic. The helical; Signal-anchor for type II membrane protein transmembrane segment at L8–T28 threads the bilayer. Residues L29–P133 are Periplasmic-facing. Positions 120 and 124 each coordinate heme.

It belongs to the CcmE/CycJ family.

The protein localises to the cell inner membrane. Its function is as follows. Heme chaperone required for the biogenesis of c-type cytochromes. Transiently binds heme delivered by CcmC and transfers the heme to apo-cytochromes in a process facilitated by CcmF and CcmH. The protein is Cytochrome c-type biogenesis protein CcmE of Wolbachia sp. subsp. Drosophila simulans (strain wRi).